A 364-amino-acid polypeptide reads, in one-letter code: Coproporphyrin III ferrochelatase (364 aa).

2 residues coordinate Fe-coproporphyrin III: R29 and Y118. Fe(2+) is bound by residues H169 and E250.

It belongs to the ferrochelatase family.

It is found in the cytoplasm. The catalysed reaction is Fe-coproporphyrin III + 2 H(+) = coproporphyrin III + Fe(2+). Its pathway is porphyrin-containing compound metabolism; protoheme biosynthesis. Involved in coproporphyrin-dependent heme b biosynthesis. Catalyzes the insertion of ferrous iron into coproporphyrin III to form Fe-coproporphyrin III. The protein is Coproporphyrin III ferrochelatase of Streptococcus pneumoniae (strain Taiwan19F-14).